A 644-amino-acid polypeptide reads, in one-letter code: Exoribonuclease 2 (644 aa).

Residues 189–516 enclose the RNB domain; the sequence is REDLTALDFV…NHRLLKAVIK (328 aa). The S1 motif domain maps to 561–643; that stretch reads DTRFAAEIVD…ETRSIIARPV (83 aa).

It belongs to the RNR ribonuclease family. RNase II subfamily.

It is found in the cytoplasm. The catalysed reaction is Exonucleolytic cleavage in the 3'- to 5'-direction to yield nucleoside 5'-phosphates.. Its function is as follows. Involved in mRNA degradation. Hydrolyzes single-stranded polyribonucleotides processively in the 3' to 5' direction. The chain is Exoribonuclease 2 from Escherichia coli O45:K1 (strain S88 / ExPEC).